The following is a 492-amino-acid chain: Cytochrome P450 monooxygenase MYCFIDRAFT_204672 (492 aa).

N-linked (GlcNAc...) asparagine glycosylation is present at asparagine 116. A helical membrane pass occupies residues 269-293; that stretch reads FLISMIFISAANGCVVSGAMLYSIA. Asparagine 335 carries an N-linked (GlcNAc...) asparagine glycan. Residue cysteine 430 participates in heme binding.

Belongs to the cytochrome P450 family. It depends on heme as a cofactor.

It is found in the membrane. Its pathway is secondary metabolite biosynthesis. In terms of biological role, cytochrome P450 monooxygenase; part of the gene cluster that mediates the biosynthesis of an emodin derivative that may be involved in black Sigatoka disease of banana. The pathway begins with the synthesis of atrochrysone thioester by the polyketide synthase PKS8-1. The atrochrysone carboxyl ACP thioesterase MYCFIDRAFT_190111 then breaks the thioester bond and releases the atrochrysone carboxylic acid from PKS8-1. The decarboxylase MYCFIDRAFT_34057 then catalyzes the concerted decarboxylation-elimination required to convert atochrysone carboxylic acid into emodin anthrone, which is further oxidized to emodin by the anthrone oxygenase MYCFIDRAFT_34418. The functions of the other tailoring enzymes as well as the final product of the cluster have still to be identified. In Pseudocercospora fijiensis (strain CIRAD86) (Black leaf streak disease fungus), this protein is Cytochrome P450 monooxygenase MYCFIDRAFT_204672.